A 90-amino-acid polypeptide reads, in one-letter code: uncharacterized protein (90 aa).

This is an uncharacterized protein from Clostridium acetobutylicum (strain ATCC 824 / DSM 792 / JCM 1419 / IAM 19013 / LMG 5710 / NBRC 13948 / NRRL B-527 / VKM B-1787 / 2291 / W).